We begin with the raw amino-acid sequence, 563 residues long: Tripeptidyl-peptidase 1 (563 aa).

A signal peptide spans 1-19 (MGPRSGLLGLFALFVAGKC). A propeptide spans 20–195 (SYSPEPDQQR…PEPQVPGTVG (176 aa)) (removed in mature form). The cysteines at positions 111 and 122 are disulfide-linked. One can recognise a Peptidase S53 domain in the interval 199 to 563 (GVTPSVIRKR…PALLKTLMNP (365 aa)). 2 N-linked (GlcNAc...) asparagine glycosylation sites follow: Asn-210 and Asn-222. Residues Glu-272 and Asp-276 each act as charge relay system in the active site. N-linked (GlcNAc...) asparagine glycosylation is found at Asn-286, Asn-313, and Asn-443. 2 disulfide bridges follow: Cys-365/Cys-526 and Cys-522/Cys-537. Residue Ser-475 is the Charge relay system of the active site. 2 residues coordinate Ca(2+): Asp-517 and Val-518. Ca(2+) is bound by residues Gly-539, Gly-541, and Asp-543.

Monomer. Interacts with CLN5. Interacts with CLN3. The cofactor is Ca(2+). In terms of processing, activated by autocatalytic proteolytical processing upon acidification. N-glycosylation is required for processing and activity.

Its subcellular location is the lysosome. It is found in the melanosome. It catalyses the reaction Release of an N-terminal tripeptide from a polypeptide, but also has endopeptidase activity.. In terms of biological role, lysosomal serine protease with tripeptidyl-peptidase I activity. May act as a non-specific lysosomal peptidase which generates tripeptides from the breakdown products produced by lysosomal proteinases. Requires substrates with an unsubstituted N-terminus. The protein is Tripeptidyl-peptidase 1 (TPP1) of Bos taurus (Bovine).